The following is a 255-amino-acid chain: Complement C1q-like protein 3 (255 aa).

An N-terminal signal peptide occupies residues Met-1–Ala-20. The interval Lys-39–Gly-109 is disordered. The Collagen-like domain maps to Gly-61 to Asn-111. Residues Arg-75–Pro-89 show a composition bias toward pro residues. In terms of domain architecture, C1q spans Ser-122 to Asp-255.

As to quaternary structure, forms homooligomers. Interacts with ADGRB3. Interacts with C1QL2 and C1QL4, when proteins are coexpressed; this interaction does not occur after secretion. In terms of tissue distribution, highly expressed in adipose tissue, with expression levels at least 2 orders of magnitude higher than in other tissues, including brain and kidney.

The protein resides in the secreted. Functionally, may regulate the number of excitatory synapses that are formed on hippocampus neurons. Has no effect on inhibitory synapses. Plays a role in glucose homeostasis. Via AMPK signaling pathway, stimulates glucose uptake in adipocytes, myotubes and hepatocytes and enhances insulin-stimulated glucose uptake. In a hepatoma cell line, reduces the expression of gluconeogenic enzymes G6PC1 and PCK1 and hence decreases de novo glucose production. In Homo sapiens (Human), this protein is Complement C1q-like protein 3 (C1QL3).